The following is a 621-amino-acid chain: Intermediate filament protein ifc-2 (621 aa).

Residues 20-55 form a head region; it reads SGAYTSGFGGLVSGMSSAGAICTTQIRDAREREKRE. An IF rod domain is found at 52–400; the sequence is EKREIGLLND…VLLNGANVTT (349 aa). The interval 56-87 is coil 1A; that stretch reads IGLLNDRLADYIEKVRFLEAQNQCLSHDIDIL. The interval 88–100 is linker 1; sequence RRGFSGGGHVSGL. Residues 101–238 form a coil 1B region; it reads YDTEIAQAKR…TENSTRIEQE (138 aa). Residues 239–256 form a linker 12 region; that stretch reads LVFIRRDTTAENRDYFRH. The coil 2 stretch occupies residues 257 to 400; the sequence is ELQAAIRDIR…VLLNGANVTT (144 aa). Residues 401 to 549 form a tail region; the sequence is YVSNTHPSGV…RVDVGGFRVE (149 aa). The LTD domain occupies 508-621; the sequence is SGRSFHSWYL…EERAWFVYLN (114 aa).

Belongs to the intermediate filament family.

It is found in the cytoplasm. In terms of biological role, cytoplasmic intermediate filaments provide mechanical strength to cells. In Caenorhabditis briggsae, this protein is Intermediate filament protein ifc-2.